We begin with the raw amino-acid sequence, 262 residues long: Acyl-[acyl-carrier-protein]--UDP-N-acetylglucosamine O-acyltransferase (262 aa).

It belongs to the transferase hexapeptide repeat family. LpxA subfamily. In terms of assembly, homotrimer.

The protein localises to the cytoplasm. It catalyses the reaction a (3R)-hydroxyacyl-[ACP] + UDP-N-acetyl-alpha-D-glucosamine = a UDP-3-O-[(3R)-3-hydroxyacyl]-N-acetyl-alpha-D-glucosamine + holo-[ACP]. It functions in the pathway glycolipid biosynthesis; lipid IV(A) biosynthesis; lipid IV(A) from (3R)-3-hydroxytetradecanoyl-[acyl-carrier-protein] and UDP-N-acetyl-alpha-D-glucosamine: step 1/6. Its function is as follows. Involved in the biosynthesis of lipid A, a phosphorylated glycolipid that anchors the lipopolysaccharide to the outer membrane of the cell. The sequence is that of Acyl-[acyl-carrier-protein]--UDP-N-acetylglucosamine O-acyltransferase from Pectobacterium atrosepticum (strain SCRI 1043 / ATCC BAA-672) (Erwinia carotovora subsp. atroseptica).